Here is a 313-residue protein sequence, read N- to C-terminus: Curved DNA-binding protein (313 aa).

The J domain occupies 5–69; it reads DYYKILGVSR…EKRKAYDAIG (65 aa). The disordered stretch occupies residues 71–93; the sequence is GWKQGQGFTPPPGWESRPGGEGV.

The protein localises to the cytoplasm. It localises to the nucleoid. Functionally, DNA-binding protein that preferentially recognizes a curved DNA sequence. It is probably a functional analog of DnaJ; displays overlapping activities with DnaJ, but functions under different conditions, probably acting as a molecular chaperone in an adaptive response to environmental stresses other than heat shock. Lacks autonomous chaperone activity; binds native substrates and targets them for recognition by DnaK. Its activity is inhibited by the binding of CbpM. The sequence is that of Curved DNA-binding protein from Coxiella burnetii (strain Dugway 5J108-111).